The chain runs to 406 residues: Nicotinate phosphoribosyltransferase (406 aa).

A Phosphohistidine; by autocatalysis modification is found at H226.

Belongs to the NAPRTase family. In terms of processing, transiently phosphorylated on a His residue during the reaction cycle. Phosphorylation strongly increases the affinity for substrates and increases the rate of nicotinate D-ribonucleotide production. Dephosphorylation regenerates the low-affinity form of the enzyme, leading to product release.

It catalyses the reaction nicotinate + 5-phospho-alpha-D-ribose 1-diphosphate + ATP + H2O = nicotinate beta-D-ribonucleotide + ADP + phosphate + diphosphate. It participates in cofactor biosynthesis; NAD(+) biosynthesis; nicotinate D-ribonucleotide from nicotinate: step 1/1. Functionally, catalyzes the synthesis of beta-nicotinate D-ribonucleotide from nicotinate and 5-phospho-D-ribose 1-phosphate at the expense of ATP. The sequence is that of Nicotinate phosphoribosyltransferase from Verminephrobacter eiseniae (strain EF01-2).